We begin with the raw amino-acid sequence, 151 residues long: Large ribosomal subunit protein bL9 (151 aa).

It belongs to the bacterial ribosomal protein bL9 family.

Its function is as follows. Binds to the 23S rRNA. The protein is Large ribosomal subunit protein bL9 of Desulfosudis oleivorans (strain DSM 6200 / JCM 39069 / Hxd3) (Desulfococcus oleovorans).